Here is a 132-residue protein sequence, read N- to C-terminus: Thioredoxin H4-2 (132 aa).

Residues D18–D130 enclose the Thioredoxin domain. Active-site nucleophile residues include C56 and C59. C56 and C59 are joined by a disulfide.

This sequence belongs to the thioredoxin family. Plant H-type subfamily.

It is found in the cytoplasm. Probable thiol-disulfide oxidoreductase that may be involved in the redox regulation of a number of cytosolic enzymes. The sequence is that of Thioredoxin H4-2 from Oryza sativa subsp. japonica (Rice).